The primary structure comprises 837 residues: Tuftelin-interacting protein 11 (837 aa).

Basic and acidic residues-rich tracts occupy residues 1-13 (MSLS…GEGR) and 53-64 (VWAERDSDDERP). Disordered stretches follow at residues 1–21 (MSLS…DDER), 53–72 (VWAE…KRAR), and 85–133 (LKKG…KGFA). The interval 1–50 (MSLSHLYRDGEGRIDDDDDERENFEITDWDLQNEFNPNRQRHWQTKEEAT) is required for interaction with DHX15. Ser-2, Ser-59, and Ser-98 each carry phosphoserine. Over residues 91–102 (EEAELEDSDDEE) the composition is skewed to acidic residues. The segment covering 103-116 (KPVKQDDFPKDFGP) has biased composition (basic and acidic residues). At Ser-144 the chain carries Phosphoserine. One can recognise a G-patch domain in the interval 149 to 195 (TKGIGQKLLQKMGYVPGRGLGKNAQGIINPIEAKQRKGKGAVGAYGS). Residues 179-236 (IEAKQRKGKGAVGAYGSERTTQSMQDFPVVDSEEEAEEEFQKELSQWRKDPSGSKKKP) form a disordered region. Ser-210 is modified (phosphoserine). Residues 217-231 (EFQKELSQWRKDPSG) are compositionally biased toward basic and acidic residues. Residues 700–705 (VKDKFN) carry the Nuclear localization signal motif. The tract at residues 710 to 734 (IMNRAVSSNVGAYMQPGARENIAYL) is required for nuclear speckle localization.

This sequence belongs to the TFP11/STIP family. As to quaternary structure, identified in the spliceosome C complex. Found in the Intron Large (IL) complex, a post-mRNA release spliceosomal complex containing the excised intron, U2, U5 and U6 snRNPs, and splicing factors. Interacts with TUFT1. Interacts with DHX15; indicative for a recruitment of DHX15 to the IL complex. Interacts with GCFC2.

Its subcellular location is the cytoplasm. It is found in the nucleus. In terms of biological role, involved in pre-mRNA splicing, specifically in spliceosome disassembly during late-stage splicing events. Intron turnover seems to proceed through reactions in two lariat-intron associated complexes termed Intron Large (IL) and Intron Small (IS). In cooperation with DHX15 seems to mediate the transition of the U2, U5 and U6 snRNP-containing IL complex to the snRNP-free IS complex leading to efficient debranching and turnover of excised introns. May play a role in the differentiation of ameloblasts and odontoblasts or in the forming of the enamel extracellular matrix. This Pongo abelii (Sumatran orangutan) protein is Tuftelin-interacting protein 11 (TFIP11).